Here is a 46-residue protein sequence, read N- to C-terminus: KECMADGTVCYIHNHNDCCGSCLCPNGPLARPWEVLVGNCKCGPKA.

Intrachain disulfides connect C3-C19, C10-C22, C18-C42, and C24-C40. The segment at 31-33 (RPW) is keys region for toxin activity.

It belongs to the neurotoxin 16 (SFI) family. In terms of tissue distribution, expressed by the venom gland.

It is found in the secreted. Functionally, insecticidal toxin. It inhibits insect voltage-gated sodium channels (Nav) by partially blocking the channel pore in DUM neurons from the American cockroach, not by acting as a gating modifier. The inhibition is only partially reversible after prolonged washout. In vivo, the toxin causes flaccid paralysis followed by death when injected into Heliothis virescens larvae. It also causes uncoordinated movements followed by full paralysis to sheep blowflies (Lucilia cuprina). When the toxin is fused to snowdrop lectin, it is orally active against larvae of the tomato moth (Laconobia oleracea), the rice brown planthopper (Nilaparvata lugens), and the peach-potato aphid (Myzus persicae). This Segestria florentina (Tube-web spider) protein is Mu-segestritoxin-Sf1g.